Consider the following 430-residue polypeptide: MDDISGRQTLPRINRLLEHVGNPQDSLSILHIAGTNGKETVSKFLTSILQHPGQQRQRVLIGRYTTSSLLNAKEEDISINNEAISLIEYSRIEKELIEADSSLKLQCNNLELLTSVALVYFAKKNCQWCIIETGLAGKQDPGSIIAGQSRVCCAITNVGISDEAFLCKFLSQITESSTNKAIFLLDGSNDEFVRNTITKRCHDVGCPLEITDPSLRDYNVHTDTWGTLEVRLPYSEEEYQIFNLRVAIAVLDFLSKEKKVCISKDQLSQGLISVDWPRSLHRLDYCYESTSGKKIALLLDNANNAKAARNLACHLRTTYGDTPLTFVIAITTGKKVSPLLDPLIRPQDYVIVTRFGSVVGMPWIQSLEPVNLLAFIKNRYTRNVNMQPDLQSVWTFLETSGLKTIVPVIVCGSLYICKELLRLHNCHLPV.

37-40 (GKET) serves as a coordination point for ATP. Glu132 is a Mg(2+) binding site. Asp300 contacts ATP.

Belongs to the folylpolyglutamate synthase family.

Its subcellular location is the mitochondrion. The enzyme catalyses (6S)-5,6,7,8-tetrahydrofolyl-(gamma-L-Glu)(n) + L-glutamate + ATP = (6S)-5,6,7,8-tetrahydrofolyl-(gamma-L-Glu)(n+1) + ADP + phosphate + H(+). The protein operates within cofactor biosynthesis; tetrahydrofolylpolyglutamate biosynthesis. Its function is as follows. Conversion of folates to polyglutamate derivatives. The sequence is that of Probable folylpolyglutamate synthase (RMA1) from Saccharomyces cerevisiae (strain ATCC 204508 / S288c) (Baker's yeast).